The sequence spans 78 residues: Large ribosomal subunit protein bL28 (78 aa).

Belongs to the bacterial ribosomal protein bL28 family.

The polypeptide is Large ribosomal subunit protein bL28 (Thermosynechococcus vestitus (strain NIES-2133 / IAM M-273 / BP-1)).